Reading from the N-terminus, the 1179-residue chain is Protein turtle homolog A (1179 aa).

Residues 1-20 (MVWCLGLAVLSLVISQGADG) form the signal peptide. The Extracellular segment spans residues 21–734 (RGKPEVVSVV…TQLPGLLPQP (714 aa)). Ig-like domains lie at 24 to 124 (PEVV…DFAN), 136 to 216 (PQFQ…GSAT), 226 to 318 (PPVI…AYLT), 322 to 410 (PAQV…SPVT), and 418 to 502 (PAFI…TNVY). Intrachain disulfides connect Cys41/Cys108, Cys158/Cys206, Cys248/Cys301, Cys344/Cys395, and Cys440/Cys486. N-linked (GlcNAc...) asparagine glycosylation is found at Asn188 and Asn256. 2 Fibronectin type-III domains span residues 507 to 611 (SPHV…TTPA) and 623 to 718 (PLSP…TSGL). Asn513 and Asn524 each carry an N-linked (GlcNAc...) asparagine glycan. The tract at residues 606–626 (LPTTPAAPGLPPTEIPPPLSP) is disordered. The segment covering 613 to 626 (PGLPPTEIPPPLSP) has biased composition (pro residues). The helical transmembrane segment at 735–755 (VLAGVVGGVCFLGVAVLVSIL) threads the bilayer. The Cytoplasmic segment spans residues 756-1179 (AGCLLNRRRA…VPHPEQATLL (424 aa)). Disordered stretches follow at residues 767 to 919 (RRRR…PLPG), 940 to 988 (DWPP…VVGA), and 1015 to 1079 (AAPR…KRRN). Positions 785-800 (GKSAAPSALGSGSPDS) are enriched in low complexity. Position 809 is a phosphoserine (Ser809). 2 stretches are compositionally biased toward pro residues: residues 826–836 (TPSPHPDPPSS) and 906–919 (VAPPPAAPPSPLPG). Thr972 bears the Phosphothreonine mark. The PDZ-binding motif lies at 1177-1179 (TLL).

Belongs to the immunoglobulin superfamily. Turtle family. Interacts with MAGI2 and SHANK1.

The protein localises to the cell membrane. It localises to the synapse. Functions in dendrite outgrowth and synapse maturation. This is Protein turtle homolog A (IGSF9) from Homo sapiens (Human).